The chain runs to 254 residues: 21S rRNA pseudouridine(2819) synthase (254 aa).

Asp-71 is an active-site residue.

Belongs to the pseudouridine synthase RluA family.

Its subcellular location is the mitochondrion. It carries out the reaction uridine(2819) in 21S rRNA = pseudouridine(2819) in 21S rRNA. In terms of biological role, pseudouridylate synthase responsible for the pseudouridine-2819 formation in mitochondrial 21S rRNA. May modulate the efficiency or the fidelity of the mitochondrial translation machinery. This is 21S rRNA pseudouridine(2819) synthase (PUS5) from Saccharomyces cerevisiae (strain ATCC 204508 / S288c) (Baker's yeast).